Here is a 315-residue protein sequence, read N- to C-terminus: Putative methyltransferase SPBC8D2.16c (315 aa).

Belongs to the class IV-like SAM-binding methyltransferase superfamily.

The protein localises to the cytoplasm. The protein resides in the nucleus. The polypeptide is Putative methyltransferase SPBC8D2.16c (Schizosaccharomyces pombe (strain 972 / ATCC 24843) (Fission yeast)).